Consider the following 195-residue polypeptide: uncharacterized protein (195 aa).

Positions 24 to 141 (NTDENLKLIF…VFLADKISWD (118 aa)) constitute an HD domain.

This is an uncharacterized protein from Lactococcus lactis subsp. cremoris (Streptococcus cremoris).